We begin with the raw amino-acid sequence, 260 residues long: Late transcription factor 1 (260 aa).

This sequence belongs to the chordopoxvirinae VLTF-1 family. In terms of assembly, interacts with the late transcription factors VLTF-2 and VLTF-3. Interacts with the late transcription elongation factor H5/VLTF-4. Interacts with itself.

Its function is as follows. Associates with RNA polymerase to initiate transcription from late gene promoters. This chain is Late transcription factor 1 (VLTF1), found in Vertebrata (FPV).